We begin with the raw amino-acid sequence, 266 residues long: MVDMAVTPVALLEASHLHYHVQQQALINDVSLHIASGEMVAIIGPNGAGKSTLLRLLTGYLSPSHGECHLLGQNLNSWQPKALARTRAVMRQYSELAFPFSVSEVIQMGRAPYGGSQDRQALQQVMAQTDCLALAQRDYRVLSGGEQQRVQLARVLAQLWQPQPTPRWLFLDEPTSALDLYHQQHTLRLLRQLTRQEPLAVCCVLHDLNLAALYADRIMLLAQGKLVACGTPEEVLNAETLTQWYQADLGVSRHPESALPQIYLRQ.

Residues leucine 12–aspartate 248 form the ABC transporter domain. An ATP-binding site is contributed by glycine 44–serine 51.

This sequence belongs to the ABC transporter superfamily. Heme (hemin) importer (TC 3.A.1.14.5) family. In terms of assembly, the complex is composed of two ATP-binding proteins (HmuV), two transmembrane proteins (HmuU) and a solute-binding protein (HmuT).

The protein resides in the cell inner membrane. Its function is as follows. Part of the ABC transporter complex HmuTUV involved in hemin import. Responsible for energy coupling to the transport system. The protein is Hemin import ATP-binding protein HmuV of Yersinia pestis bv. Antiqua (strain Antiqua).